The following is a 348-amino-acid chain: MAMVVPKEGLVVMDKESVSSASSDSHLRLQPHFPDFTIPVKDFFKSREAREFLSGALAGAMTKAVLAPLETIRTRMIVGVGSRSIPGSFLEVVQKQGWQGLWAGNEINMIRIIPTQAIELGTFEWVKRAMTSAQVKLKKIEDAKIEIGDFSFSPSISWISPVAVAGASAGIASTLVCHPLEVLKDRLTVSPEIYPSLSLAIPRIFRADGIRGFYAGLGPTLVGMLPYSTCYYFMYDKMKTSYCKSKNKKALSRPEMLVLGALAGLTASTISFPLEVARKRLMVGALKGECPPNMAAAIAEVVKKEGVMGLYRGWGASCLKVMPSSGITWVFYEAWKDILLAANTKPLI.

Solcar repeat units follow at residues 46 to 129, 157 to 241, and 251 to 338; these read SREA…VKRA, SWIS…MKTS, and LSRP…WKDI. Transmembrane regions (helical) follow at residues 52–72, 104–124, 156–176, 213–233, 256–276, and 321–341; these read FLSGALAGAMTKAVLAPLETI, GNEINMIRIIPTQAIELGTFE, ISWISPVAVAGASAGIASTLV, FYAGLGPTLVGMLPYSTCYYF, MLVLGALAGLTASTISFPLEV, and VMPSSGITWVFYEAWKDILLA.

Belongs to the mitochondrial carrier (TC 2.A.29) family.

The protein localises to the mitochondrion inner membrane. Functionally, probable mitochondrial adenylate carrier that catalyzes the transport of ATP, ADP and AMP. This Arabidopsis thaliana (Mouse-ear cress) protein is Probable mitochondrial adenine nucleotide transporter BTL1.